A 255-amino-acid polypeptide reads, in one-letter code: Sushi domain-containing protein 3 (255 aa).

Residues 1-25 (MRWAAATLRGKARPRGRAGVTTPAP) are disordered. Residues 1–103 (MRWAAATLRG…VPPHETFGFK (103 aa)) lie on the Extracellular side of the membrane. N27 is a glycosylation site (N-linked (GlcNAc...) asparagine). Residues 30-93 (GTCAKLRLPP…WSSGSPVCKL (64 aa)) form the Sushi domain. Intrachain disulfides connect C32/C75 and C61/C91. The chain crosses the membrane as a helical span at residues 104–124 (VAVIASIVSCAIILLMSMAFL). Topologically, residues 125 to 255 (TCCLLKCVKK…PQQPAAYALG (131 aa)) are cytoplasmic. The segment at 173 to 255 (SGPSQAHDNH…PQQPAAYALG (83 aa)) is disordered. A compositionally biased stretch (basic and acidic residues) spans 179–191 (HDNHSFTTDHGES).

As to expression, highly expressed in estrogen receptor-positive breast tumors.

Its subcellular location is the cell membrane. Functionally, may play a role in breast tumorigenesis by promoting estrogen-dependent cell proliferation, cell-cell interactions and migration. The protein is Sushi domain-containing protein 3 (SUSD3) of Homo sapiens (Human).